The sequence spans 319 residues: Molybdenum cofactor biosynthesis bifunctional protein (319 aa).

The interval 1–145 (MIDVGDKAVT…GKSGHWQRPA (145 aa)) is molybdenum cofactor biosynthesis protein C. Substrate is bound by residues 61–63 (LCH) and 99–100 (ME). The active site involves Asp-114. The interval 146–319 (IAPDVAPTGA…KGADHGTVKG (174 aa)) is molybdenum cofactor biosynthesis protein B.

This sequence in the N-terminal section; belongs to the MoaC family. The protein in the C-terminal section; belongs to the MoaB/Mog family.

The catalysed reaction is (8S)-3',8-cyclo-7,8-dihydroguanosine 5'-triphosphate = cyclic pyranopterin phosphate + diphosphate. It participates in cofactor biosynthesis; molybdopterin biosynthesis. In terms of biological role, catalyzes the conversion of (8S)-3',8-cyclo-7,8-dihydroguanosine 5'-triphosphate to cyclic pyranopterin monophosphate (cPMP). The chain is Molybdenum cofactor biosynthesis bifunctional protein (moaCB) from Synechococcus elongatus (strain ATCC 33912 / PCC 7942 / FACHB-805) (Anacystis nidulans R2).